Reading from the N-terminus, the 464-residue chain is MDFCFMIFYNSLSGQKEQFKPIEANKIKMYACGVTVYDDCHIGHARTYIAFDVINRYFKYRGYDVTLVRNITDIDDKIIKRANENGESTTELVERNIKAMHDVFARLNILKPSKEPRATETIPEMVAMIETLIKKGYAYQGANGDVFYRVTKFADYGKLSKQNLEALQQGSRVDVVEEKENPMDFVLWKMAKEGEPAWDSPWGAGRPGWHIECSAMSKKLLGDTFDIHAGGSDLRFPHHENEIAQSEACNECTFANYWLHSGMVKVNAEKMSKSLNNFFTIVEVLEEYHPEVVRYFLASTVYRSEINYSKENLENAKASVERLFNALRDIEPIEVNLPDDASEYEEKFIKAMDNDFNTPEALAVLFSLAKEINTLKTTNKYKASGYAYLLRKLCDVLGILFTDIEEYFKQGDGADASEIEKLIAERTQAKKDKNYARADEIRNQLQQQGIILEDSATGTTWKKG.

A Zn(2+)-binding site is contributed by C32. Positions 34–44 match the 'HIGH' region motif; it reads VTVYDDCHIGH. Zn(2+)-binding residues include C213, H238, and E242. The 'KMSKS' region motif lies at 270 to 274; sequence KMSKS. Position 273 (K273) interacts with ATP.

Belongs to the class-I aminoacyl-tRNA synthetase family. In terms of assembly, monomer. The cofactor is Zn(2+).

The protein resides in the cytoplasm. It catalyses the reaction tRNA(Cys) + L-cysteine + ATP = L-cysteinyl-tRNA(Cys) + AMP + diphosphate. The protein is Cysteine--tRNA ligase of Francisella tularensis subsp. holarctica (strain LVS).